The sequence spans 447 residues: MKPVVALVGRPNVGKSTLFNRLTKSRDAIVADFAGLTRDRHYGNAKQGKHEFIVIDTGGFEPDAAGGIFKEMAKQTTQAVAEADVVIFVVDAREGISAQDHEIAKYLRRLGKPCVLAANKAEGMLAGAQLVEFFELGLGEVHAISAAHGQGIRTLVDLALAPLHLEDQDDADEQREPGIIKLAVAGRPNVGKSTLINTWLGEERLVAFDLPGTTRDAISVPFERNGQKFELVDTAGLRRRGKVFEAIEKFSVVKTLQAIESSNVVLLLIDATQGVTDQDAHIAGYILENGRAVVIAVNKWDAVDEYQRELVKRSIETRLPFLKFATMHLISATKRQGLGPLWASIAQAYKAANCKMSTPILTRLLLEAVQFQSPKRSGMFRPKLRYAHQGGMNPPVIIIHGNSLEHVTDAYKRFLEGRFRKEFDLVGTPMRIEFKSSTNPYADKATA.

2 consecutive EngA-type G domains span residues 3 to 167 (PVVA…HLED) and 180 to 353 (IKLA…KAAN). GTP contacts are provided by residues 9 to 16 (GRPNVGKS), 56 to 60 (DTGGF), 119 to 122 (NKAE), 186 to 193 (GRPNVGKS), 233 to 237 (DTAGL), and 298 to 301 (NKWD). The region spanning 354-438 (CKMSTPILTR…PMRIEFKSST (85 aa)) is the KH-like domain.

Belongs to the TRAFAC class TrmE-Era-EngA-EngB-Septin-like GTPase superfamily. EngA (Der) GTPase family. In terms of assembly, associates with the 50S ribosomal subunit.

Functionally, GTPase that plays an essential role in the late steps of ribosome biogenesis. This Albidiferax ferrireducens (strain ATCC BAA-621 / DSM 15236 / T118) (Rhodoferax ferrireducens) protein is GTPase Der.